We begin with the raw amino-acid sequence, 196 residues long: Large ribosomal subunit protein eL15 (196 aa).

The segment covering 162 to 172 (RGKTSAGRRAR) has biased composition (basic residues). Positions 162-196 (RGKTSAGRRARGLQNRGKGTEGLRPSTNADKRNKS) are disordered.

It belongs to the eukaryotic ribosomal protein eL15 family.

In Halobacterium salinarum (strain ATCC 29341 / DSM 671 / R1), this protein is Large ribosomal subunit protein eL15.